The following is a 231-amino-acid chain: Probable pyridoxamine 5'-phosphate oxidase (231 aa).

Gln-20–Lys-23 contributes to the pyridoxal 5'-phosphate binding site. Arg-74–Leu-77 is an FMN binding site. Lys-79 provides a ligand contact to pyridoxal 5'-phosphate. FMN is bound by residues Phe-89–Thr-90, Lys-96–Lys-97, and Gln-119. Tyr-137, Arg-141, and Ser-145 together coordinate pyridoxal 5'-phosphate. FMN is bound by residues Gln-154 to Ser-155 and Trp-202. Arg-208–His-210 lines the pyridoxal 5'-phosphate pocket. An FMN-binding site is contributed by Arg-212.

It belongs to the pyridoxamine 5'-phosphate oxidase family. As to quaternary structure, homodimer. It depends on FMN as a cofactor.

It catalyses the reaction pyridoxamine 5'-phosphate + O2 + H2O = pyridoxal 5'-phosphate + H2O2 + NH4(+). The enzyme catalyses pyridoxine 5'-phosphate + O2 = pyridoxal 5'-phosphate + H2O2. It functions in the pathway cofactor metabolism; pyridoxal 5'-phosphate salvage; pyridoxal 5'-phosphate from pyridoxamine 5'-phosphate: step 1/1. The protein operates within cofactor metabolism; pyridoxal 5'-phosphate salvage; pyridoxal 5'-phosphate from pyridoxine 5'-phosphate: step 1/1. In terms of biological role, catalyzes the oxidation of either pyridoxine 5'-phosphate (PNP) or pyridoxamine 5'-phosphate (PMP) into pyridoxal 5'-phosphate (PLP). This is Probable pyridoxamine 5'-phosphate oxidase from Schizosaccharomyces pombe (strain 972 / ATCC 24843) (Fission yeast).